The chain runs to 365 residues: Alanine racemase (365 aa).

Lys35 serves as the catalytic Proton acceptor; specific for D-alanine. N6-(pyridoxal phosphate)lysine is present on Lys35. A substrate-binding site is contributed by Arg130. The active-site Proton acceptor; specific for L-alanine is the Tyr256. Residue Met304 participates in substrate binding.

The protein belongs to the alanine racemase family. Pyridoxal 5'-phosphate is required as a cofactor.

The catalysed reaction is L-alanine = D-alanine. Its pathway is amino-acid biosynthesis; D-alanine biosynthesis; D-alanine from L-alanine: step 1/1. Its function is as follows. Catalyzes the interconversion of L-alanine and D-alanine. May also act on other amino acids. This is Alanine racemase (alr) from Acidovorax ebreus (strain TPSY) (Diaphorobacter sp. (strain TPSY)).